The following is a 556-amino-acid chain: Chaperone protein HscC (556 aa).

Belongs to the heat shock protein 70 family.

In terms of biological role, probable chaperone. Has ATPase activity. Not stimulated by DnaJ. This chain is Chaperone protein HscC (hscC), found in Escherichia coli (strain K12).